We begin with the raw amino-acid sequence, 192 residues long: Elongation factor P (192 aa).

It belongs to the elongation factor P family.

Its subcellular location is the cytoplasm. It functions in the pathway protein biosynthesis; polypeptide chain elongation. Involved in peptide bond synthesis. Stimulates efficient translation and peptide-bond synthesis on native or reconstituted 70S ribosomes in vitro. Probably functions indirectly by altering the affinity of the ribosome for aminoacyl-tRNA, thus increasing their reactivity as acceptors for peptidyl transferase. In Borrelia garinii subsp. bavariensis (strain ATCC BAA-2496 / DSM 23469 / PBi) (Borreliella bavariensis), this protein is Elongation factor P.